We begin with the raw amino-acid sequence, 512 residues long: Transactivator/viroplasmin protein (512 aa).

Disordered regions lie at residues glycine 76 to alanine 123 and alanine 474 to isoleucine 512. Over residues serine 476–glutamate 487 the composition is skewed to polar residues. The span at tyrosine 499 to isoleucine 512 shows a compositional bias: basic and acidic residues.

The protein belongs to the caulimoviridae viroplasmin family.

It is found in the host cytoplasm. Functionally, enhances the translation of downstream ORFs on polycistronic mRNAs derived from figwort mosaic virus. The protein is Transactivator/viroplasmin protein of Figwort mosaic virus (strain DxS) (FMV).